Reading from the N-terminus, the 259-residue chain is MALLEICCYSMECALTAQRNGADRIELCAAPKEGGLTPSFGILRSVREHITIPVHPIIRPRGGDFYYTDGEFAAMLEDIRLVRELGFPGLVTGVLTVDGDVDMSRMEKIMAAAGPLAVTFHRAFDMCANPFNALKNLADAGVARVLTSGQKADAAQGLSIIMELIAQGDAPIIMAGAGVRANNLQNFLDAGVREVHSSAGVLLPSPMRYRNQGLSMSADIQADEYSRYRVEGAAVAENERNHCSPSGQMIFTVASCRPI.

The protein belongs to the CutC family. As to quaternary structure, homodimer.

It localises to the cytoplasm. The chain is PF03932 family protein CutC from Salmonella typhi.